Here is a 2851-residue protein sequence, read N- to C-terminus: Highly reducing polyketide synthase sthA (2851 aa).

Positions 8 to 415 (NEPIVIIGSG…GTNAHAIVEG (408 aa)) constitute a Ketosynthase family 3 (KS3) domain. The segment at 304-324 (LDPESPNDRPQYIESHGTGTP) is disordered. The interval 529–851 (IFTGQGAQYA…PYHGSLVRGE (323 aa)) is acyl transferase (AT) domain. The interval 926-1059 (HQLLGNVSPD…GELNILLVDD (134 aa)) is N-terminal hotdog fold. A PKS/mFAS DH domain is found at 926–1235 (HQLLGNVSPD…FKPVGSDAKD (310 aa)). Positions 949–1242 (PKEMTWLEGH…AKDDRNVFYK (294 aa)) are dehydratase (DH) domain. Histidine 958 serves as the catalytic Proton acceptor; for dehydratase activity. Residues 1076 to 1235 (MIPVQPSRLY…FKPVGSDAKD (160 aa)) are C-terminal hotdog fold. The active-site Proton donor; for dehydratase activity is the aspartate 1137. Residues 1390–1577 (QCTLWVAGVL…GIDTMSPPEL (188 aa)) form a methyltransferase (MT) domain region. The segment at 2079–2252 (TYWLVGLSGA…RSSVVNVGAI (174 aa)) is ketoreductase (KR)domain. Residues 2360 to 2443 (ADITKVVQQA…DLAAESIPAE (84 aa)) form the Carrier domain. Serine 2399 bears the O-(pantetheine 4'-phosphoryl)serine mark. The interval 2447 to 2496 (HVQQQQQQAGRQDASSNTSSDDETASTLPTSPESASPGTSTPVPEKDISP) is disordered. Residues 2455–2488 (AGRQDASSNTSSDDETASTLPTSPESASPGTSTP) are compositionally biased toward polar residues. The reductase (R) domain stretch occupies residues 2535 to 2767 (LTGCSGLLGH…DLVSVDTCCS (233 aa)).

Requires pantetheine 4'-phosphate as cofactor.

It catalyses the reaction 7 malonyl-CoA + acetyl-CoA + 10 AH2 + 5 S-adenosyl-L-methionine + 2 H(+) = dehydroprobetaenone I + 10 A + 5 S-adenosyl-L-homocysteine + 7 CO2 + 8 CoA + 6 H2O. The protein operates within mycotoxin biosynthesis. Its function is as follows. Highly reducing polyketide synthase; part of the gene cluster that mediates the biosynthesis of the phytotoxin stemphyloxin II. The first step of the pathway is the synthesis of dehydroprobetaenone I by the polyketide synthase sthA and the enoyl reductase sthE via condensation of one acetyl-CoA starter unit with 7 malonyl-CoA units and 5 methylations. The C-terminal reductase (R) domain of sthA catalyzes the reductive release of the polyketide chain. Because sthA lacks a designated enoylreductase (ER) domain, the required activity is provided the enoyl reductase sthE. The short-chain dehydrogenase/reductase sthC then catalyzes reduction of dehydroprobetaenone I to probetaenone I. The cytochrome P450 monooxygenase sthF catalyzes successive epoxidation, oxidation (resulting from epoxide opening) and hydroxylation to install a tertiary alcohol in the decaline ring to yield betaenone C from dehydroprobetaenone I and betaenone B from probetaenone I. The FAD-linked oxidoreductase sthB is responsible for the conversion of betaenone C to betaenone A via an intramolecular aldol reaction between C-1 and C-17 to form the bridged tricyclic system in betaenone A. Finally, the cytochrome P450 monooxygenase sthD catalyzes the hydroxylation of C-15 to afford the final metabolite stemphyloxin II. The polypeptide is Highly reducing polyketide synthase sthA (Phaeosphaeria nodorum (strain SN15 / ATCC MYA-4574 / FGSC 10173) (Glume blotch fungus)).